The following is a 761-amino-acid chain: Signal transducer and transcription activator (761 aa).

An SH2 domain is found at 594 to 658; that stretch reads WKAGCIMGFI…APWTARDFQV (65 aa). Tyr711 bears the Phosphotyrosine; by JAK mark.

This sequence belongs to the transcription factor STAT family. Forms a homodimer or a heterodimer with a related family member. Post-translationally, tyrosine phosphorylated by hopscotch. Phosphorylation is required for DNA-binding activity and dimerization.

Its subcellular location is the cytoplasm. The protein localises to the nucleus. Its function is as follows. Might play a role in signal transduction and activation of transcription. Plays an important role in the segmental pattern formation in the early embryo by activating specific stripes of pair rule gene expression in early development as part of the Janus kinase-STAT pathway. Might play a role in male germline stem cell maintenance. The chain is Signal transducer and transcription activator (Stat92E) from Drosophila melanogaster (Fruit fly).